The sequence spans 483 residues: V-type proton ATPase subunit B 2 (483 aa).

The protein belongs to the ATPase alpha/beta chains family. As to quaternary structure, V-ATPase is a heteromultimeric enzyme composed of a peripheral catalytic V1 complex (main components: subunits A, B, C, D, E, and F) attached to an integral membrane V0 proton pore complex (main component: the proteolipid protein).

Functionally, non-catalytic subunit of the peripheral V1 complex of vacuolar ATPase. V-ATPase is responsible for acidifying a variety of intracellular compartments in eukaryotic cells. The protein is V-type proton ATPase subunit B 2 of Hordeum vulgare (Barley).